The chain runs to 679 residues: Glycine--tRNA ligase beta subunit (679 aa).

This sequence belongs to the class-II aminoacyl-tRNA synthetase family. Tetramer of two alpha and two beta subunits.

The protein resides in the cytoplasm. It carries out the reaction tRNA(Gly) + glycine + ATP = glycyl-tRNA(Gly) + AMP + diphosphate. The sequence is that of Glycine--tRNA ligase beta subunit from Streptococcus equi subsp. zooepidemicus (strain H70).